The following is a 726-amino-acid chain: MLTTFLNSLMMAMTMVTMTAPAQPQMTTVATAIDSNPNKASKDASDPRAYLNEIDGDKAMTWVEAHNLSTVDKLSKDPRYSEYQADALTILQATDRIASPSFARDGMIDNFWQDGTHVQGLWRRTTWESYRSGNPQWRTILDVDALSKAEGKTWVFEGGDCLPPTSNLCLIRLSDGGKDADVVREFDIAKGEFVKEGFVLPEGKQSVTWVDENTIYVTREWTPGEVTSSGYAYVTKVVKRGQSLDQAVEIFRGQKKDVSAERGVLRDIDGKYVMDTSYRGLDFFNTELAFYPNGHPDTRKVVLPLPTTAVFSGYYKGQAIYWLKSDWTSAKGTVFHNGAIIAFDLKAALADPARVEPLVLFMPNEHQSVAGTTQTKNRLVLSILSNVTSEVRSFDFGKGGWSSFKLALPENSTLSLTSSDDESDQLFVFSEGFLEPSTLFCADAATGQVEKITSTPARFDAGGLQAQQFWATSKDGTKVPYFLVARKDVKLDGTNPTILYAYGGFQIPMQPSYSAVLGKLWLEKGGAYALANIRGGGEFGPKWHDAGLKTNRQRVYDDFQAVAQDLIAKKVTSTPHLGIMGGSNGGLLMGVQMIQRPDLWNAVVIQVPLLDMVNFTRMSAGASWQAEYGSPDDPVEGAFLRSISPYHNVKAGVAYPEPFFETSTKDDRVGPVHARKMAALFEDMGLPFYYYENIEGGHAAAANLQEHARRYALEYIYMFQKLMDNK.

Active-site charge relay system residues include Ser583 and His698.

The protein belongs to the peptidase S9B family.

This is an uncharacterized protein from Sinorhizobium fredii (strain NBRC 101917 / NGR234).